Consider the following 517-residue polypeptide: MAIKSIFIIIIISIITSISELYALDPSFLRLSTSLQRSSFPQDFRFGAASSAYQSEGAANVDGREPSIWDTFTKQYPEKISDGSNGDVADEFYYRFKEDVAHMKEIGLDSFRFSISWSRILPRGTVAGGVNQAGINFYNHLINELISNGIRPLVTLFHWDTPQALEDEYGGFLNPQIVKDFVEYVDICFKEFGDRVKEWITINEPNMFAVLGYNVGNIAPGRCSSYVQNCTVGNSATEPYLVAHYLILSHAATVQLYREKYQSFHGGTIGMTIQTYWMIPKYNTPACREAAKRALDFFFGWFADPITYGDYPKTMRELVGNRLPKFTKKQSKMVRGSFDFFGLNYYTSRYVEDVMFYANTNLSYTTDSRVNQTTEKNGVPVGEPTSADWLFICPEGFQDVLLYIKSKFQNPVILVTENGMPSENDKSLSVNIALNDEAKIKYHQLHLTALLEAVSQGADVRGYYIWSLMDDFEWEFGYKYRYGLVYVDFQDGLKRHLKSSALWYHHFLSNSSSYQMD.

The signal sequence occupies residues 1-23 (MAIKSIFIIIIISIITSISELYA). Residues Q54, H158, and 203–204 (NE) each bind a beta-D-glucoside. Residue E204 is the Proton donor of the active site. Residues C223 and C230 are joined by a disulfide bond. N-linked (GlcNAc...) asparagine glycosylation occurs at N229. Residue Y346 coordinates a beta-D-glucoside. Residues N361 and N371 are each glycosylated (N-linked (GlcNAc...) asparagine). A beta-D-glucoside is bound by residues E417, W466, 473–474 (EW), and Y482. E417 acts as the Nucleophile in catalysis. Residue N510 is glycosylated (N-linked (GlcNAc...) asparagine).

This sequence belongs to the glycosyl hydrolase 1 family.

The catalysed reaction is Hydrolysis of terminal, non-reducing beta-D-glucosyl residues with release of beta-D-glucose.. The protein is Beta-glucosidase 17 of Arabidopsis thaliana (Mouse-ear cress).